The chain runs to 117 residues: MASSAVIKLACAVLLCIVVAAPYAEAGITCGMVSSKLAPCIGYLKGGPLGGGCCGGIKALNAAAATTPDRKTACNCLKSAANAIKGINYGKAAGLPGMCGVHIPYAISPSTNCNAVH.

An N-terminal signal peptide occupies residues 1–26 (MASSAVIKLACAVLLCIVVAAPYAEA). Disulfide bonds link cysteine 30–cysteine 76, cysteine 40–cysteine 53, cysteine 54–cysteine 99, and cysteine 74–cysteine 113.

The protein belongs to the plant LTP family.

Its function is as follows. Plant non-specific lipid-transfer proteins transfer phospholipids as well as galactolipids across membranes. May play a role in wax or cutin deposition in the cell walls of expanding epidermal cells and certain secretory tissues. This chain is Non-specific lipid-transfer protein, found in Spinacia oleracea (Spinach).